An 848-amino-acid polypeptide reads, in one-letter code: Probable serine/threonine-protein kinase DDB_G0278535 (848 aa).

Composition is skewed to low complexity over residues 1–52, 60–85, and 95–116; these read MNKS…NNNH, TAATTTTSTTGTGTTAATTSTSTSST, and TSNSNLATATNTPSSSPQVSTS. The disordered stretch occupies residues 1–117; sequence MNKSSSASTV…SSSPQVSTSV (117 aa). ANK repeat units lie at residues 181–212, 218–248, 252–285, 289–320, and 324–353; these read MDQTPLCAALRNGSHDIVREILFFYQSNKMDI, SGYTPLHVAASHCDDQILMLLLNYEGINVNI, DKNSALHYFCQKFRSPNCQEPFSIFLKKGVNVNA, NGETPLHKSIFNNTVRLLMVNMLLDAGAEVNV, and RGESPLHFAVRLGREDLVSVLVKAGADITI. One can recognise an SAM domain in the interval 378 to 441; that stretch reads KNVQDIFNWL…IRNCRILRDQ (64 aa). The interval 448-478 is disordered; that stretch reads NSNVTTGSGSSGSTTTTTTTTTTTSGCGGLN. Low complexity predominate over residues 452–472; the sequence is TTGSGSSGSTTTTTTTTTTTS. One can recognise a Protein kinase domain in the interval 529 to 799; that stretch reads LEYTLKLGSG…TLNRLRHEYM (271 aa). Residues 535 to 543 and K556 each bind ATP; that span reads LGSGSSGKV. The active-site Proton acceptor is the D650. The tract at residues 810-848 is disordered; it reads RKLPSLSPPPQPTTTTTTTTSSSTSTNNINNNINNNNNT. Residues 822 to 848 are compositionally biased toward low complexity; the sequence is TTTTTTTTSSSTSTNNINNNINNNNNT.

Belongs to the protein kinase superfamily. TKL Ser/Thr protein kinase family.

The enzyme catalyses L-seryl-[protein] + ATP = O-phospho-L-seryl-[protein] + ADP + H(+). It carries out the reaction L-threonyl-[protein] + ATP = O-phospho-L-threonyl-[protein] + ADP + H(+). The protein is Probable serine/threonine-protein kinase DDB_G0278535 of Dictyostelium discoideum (Social amoeba).